The sequence spans 363 residues: Protein-glutamate methylesterase/protein-glutamine glutaminase 2 (363 aa).

The 118-residue stretch at 6 to 123 folds into the Response regulatory domain; sequence RVLIVDDSAS…AQFLLESKIH (118 aa). At aspartate 57 the chain carries 4-aspartylphosphate. Residues 172 to 363 enclose the CheB-type methylesterase domain; that stretch reads ARTTESVICI…AMEILRAGNR (192 aa). Active-site residues include serine 184, histidine 210, and aspartate 306.

Belongs to the CheB family. Phosphorylated by CheA. Phosphorylation of the N-terminal regulatory domain activates the methylesterase activity.

It is found in the cytoplasm. The enzyme catalyses [protein]-L-glutamate 5-O-methyl ester + H2O = L-glutamyl-[protein] + methanol + H(+). It catalyses the reaction L-glutaminyl-[protein] + H2O = L-glutamyl-[protein] + NH4(+). In terms of biological role, involved in chemotaxis. Part of a chemotaxis signal transduction system that modulates chemotaxis in response to various stimuli. Catalyzes the demethylation of specific methylglutamate residues introduced into the chemoreceptors (methyl-accepting chemotaxis proteins or MCP) by CheR. Also mediates the irreversible deamidation of specific glutamine residues to glutamic acid. This Rhodospirillum rubrum (strain ATCC 11170 / ATH 1.1.1 / DSM 467 / LMG 4362 / NCIMB 8255 / S1) protein is Protein-glutamate methylesterase/protein-glutamine glutaminase 2.